Consider the following 144-residue polypeptide: uncharacterized protein (144 aa).

The first 23 residues, 1 to 23 (MRKILLFATVIGFLIMVSGTLSY), serve as a signal peptide directing secretion.

This is an uncharacterized protein from Archaeoglobus fulgidus (strain ATCC 49558 / DSM 4304 / JCM 9628 / NBRC 100126 / VC-16).